We begin with the raw amino-acid sequence, 79 residues long: Sulfur carrier protein TusA (79 aa).

Cys-17 acts as the Cysteine persulfide intermediate in catalysis.

Belongs to the sulfur carrier protein TusA family.

It is found in the cytoplasm. Sulfur carrier protein which probably makes part of a sulfur-relay system. This Actinobacillus succinogenes (strain ATCC 55618 / DSM 22257 / CCUG 43843 / 130Z) protein is Sulfur carrier protein TusA.